The primary structure comprises 127 residues: MADDTKWGIAHVHASFNNTIMTVTDQTGAETLAKSSGGSVVKQNRDEASPYAAMQMAEQLAEEVLDQGIEKVHVRVRGPGGNLQRSPGPGAQAAIRALARAGLEIGRIEDVTPIPHDGTRPPKNSGY.

This sequence belongs to the universal ribosomal protein uS11 family. Part of the 30S ribosomal subunit.

Located on the platform of the 30S subunit. The sequence is that of Small ribosomal subunit protein uS11 from Halobacterium salinarum (strain ATCC 700922 / JCM 11081 / NRC-1) (Halobacterium halobium).